Reading from the N-terminus, the 364-residue chain is Long-wave-sensitive opsin 1 (364 aa).

The Extracellular segment spans residues 1–52 (MTQRWGPQRLAGGQPHAGLEDSTRASIFTYTNSNATRGPFEGPNYHIAPRWV). An O-linked (GlcNAc) serine glycan is attached at serine 22. N-linked (GlcNAc...) asparagine glycosylation occurs at asparagine 34. Residues 53–77 (YHVTSAWMIFVVIASVFTNGLVLAA) traverse the membrane as a helical segment. The Cytoplasmic portion of the chain corresponds to 78 to 89 (TMKFKKLRHPLN). A helical membrane pass occupies residues 90–115 (WILVNLAVADLAETIIASTISVVNQI). At 116-129 (YGYFVLGHPMCVLE) the chain is on the extracellular side. A disulfide bridge links cysteine 126 with cysteine 203. Residues 130–149 (GYTVSLCGITGLWSLAIISW) traverse the membrane as a helical segment. Residues 150–168 (ERWLVVCKPFGNVRFDAKL) lie on the Cytoplasmic side of the membrane. A helical membrane pass occupies residues 169 to 192 (AIAGIAFSWIWAAVWTAPPIFGWS). Residues 193-218 (RYWPHGLKTSCGPDVFSGSSYPGVQS) are Extracellular-facing. Residues 219-246 (YMIVLMITCCIIPLSVIVLCYLQVWLAI) form a helical membrane-spanning segment. The Cytoplasmic segment spans residues 247–268 (RAVAKQQKESESTQKAEKEVTR). A helical transmembrane segment spans residues 269–292 (MVMVMIFAYCVCWGPYTFFACFAA). The Extracellular segment spans residues 293–300 (AHPGYAFH). Residues 301-325 (PLVAALPAYFAKSATIYNPIIYVFM) traverse the membrane as a helical segment. Lysine 312 is subject to N6-(retinylidene)lysine. Residues 326-364 (NRQFRNCIMQLFGKKVDDGSELSSASRTEASSVSSVSPA) are Cytoplasmic-facing.

This sequence belongs to the G-protein coupled receptor 1 family. Opsin subfamily. Phosphorylated on some or all of the serine and threonine residues present in the C-terminal region. The three color pigments are found in the cone photoreceptor cells. Expressed in retina.

It is found in the membrane. Its function is as follows. Visual pigments are the light-absorbing molecules that mediate vision. They consist of an apoprotein, opsin, covalently linked to cis-retinal. The sequence is that of Long-wave-sensitive opsin 1 (OPN1LW) from Felis catus (Cat).